The chain runs to 407 residues: Argininosuccinate synthase (407 aa).

ATP-binding positions include 16–24 (AYSGGLDTS) and alanine 44. 2 residues coordinate L-citrulline: tyrosine 96 and serine 101. Glycine 126 lines the ATP pocket. Threonine 128, asparagine 132, and aspartate 133 together coordinate L-aspartate. Asparagine 132 serves as a coordination point for L-citrulline. Positions 136, 185, 194, 270, and 282 each coordinate L-citrulline.

This sequence belongs to the argininosuccinate synthase family. Type 1 subfamily. In terms of assembly, homotetramer.

It localises to the cytoplasm. It catalyses the reaction L-citrulline + L-aspartate + ATP = 2-(N(omega)-L-arginino)succinate + AMP + diphosphate + H(+). Its pathway is amino-acid biosynthesis; L-arginine biosynthesis; L-arginine from L-ornithine and carbamoyl phosphate: step 2/3. This chain is Argininosuccinate synthase, found in Shewanella oneidensis (strain ATCC 700550 / JCM 31522 / CIP 106686 / LMG 19005 / NCIMB 14063 / MR-1).